We begin with the raw amino-acid sequence, 610 residues long: Menin (610 aa).

Residues 214 to 390 (GVAERSWLYL…SLLEAGEERP (177 aa)) form an interaction with FANCD2 region. The tract at residues 460–552 (REAEAAEAEE…SPPPEGPVLT (93 aa)) is disordered. Over residues 484-500 (RRESKPEEPPPPKKPAL) the composition is skewed to basic and acidic residues. Phosphoserine occurs at positions 487 and 543. Phosphothreonine is present on T594.

Component of the MLL-HCF complex, at least composed of KMT2A/MLL1, MEN1, ASH2L, RBBP5, DPY30, WDR5, HCFC1 and HCFC2. Component of the menin-associated histone methyltransferase complex, at least composed of KMT2B/MLL4, MEN1, ASH2L, RBBP5, DPY30 and WDR5. Interacts with POLR2B. Interacts with POLR2A phosphorylated at 'Ser-5', but not with the unphosphorylated, nor 'Ser-2' phosphorylated POLR2A forms. Interacts with FANCD2 and DBF4. Interacts with SMAD3, but not with SMAD2, nor SMAD4. Directly interacts with NFKB1, NFKB2 and RELA. Interacts with JUND (via MBM motif); inhibits the interaction of JUND with MAPK10 and the phosphorylation of JUND by MAP kinases MAPK8 and MAPK10. Interacts with KMT2A (via MBM motif). The KMT2A-MEN1 complex interacts with PSIP1 with a greater affinity as MEN1 enhances interaction of KMT2A with PSIP1. Widely expressed, including in the pituitary, brain, large intestine, spleen, kidney, adrenal gland, ovary, testis, thymus, lung, epididymis, bone marrow, pancreatic islets and placenta.

It is found in the nucleus. Its function is as follows. Essential component of a MLL/SET1 histone methyltransferase (HMT) complex, a complex that specifically methylates 'Lys-4' of histone H3 (H3K4). Functions as a transcriptional regulator. Binds to the TERT promoter and represses telomerase expression. Represses JUND-mediated transcriptional activation on AP1 sites, as well as that mediated by NFKB subunit RELA. Positively regulates HOXC8 and HOXC6 gene expression. May be involved in normal hematopoiesis through the activation of HOXA9 expression. May be involved in DNA repair. Plays a role in TGFB1-mediated inhibition of cell-proliferation, possibly regulating SMAD3 transcriptional activity. The protein is Menin (Men1) of Rattus norvegicus (Rat).